We begin with the raw amino-acid sequence, 59 residues long: Large ribosomal subunit protein uL30 (59 aa).

This sequence belongs to the universal ribosomal protein uL30 family. Part of the 50S ribosomal subunit.

The sequence is that of Large ribosomal subunit protein uL30 from Photobacterium profundum (strain SS9).